The sequence spans 335 residues: Glyceraldehyde-3-phosphate dehydrogenase (335 aa).

NAD(+)-binding positions include 10–11 (RI), aspartate 33, lysine 77, and threonine 119. Residues 150 to 152 (SCT), threonine 181, 210 to 211 (TG), and arginine 233 contribute to the D-glyceraldehyde 3-phosphate site. Cysteine 151 functions as the Nucleophile in the catalytic mechanism. Asparagine 315 is an NAD(+) binding site.

This sequence belongs to the glyceraldehyde-3-phosphate dehydrogenase family. Homotetramer.

Its subcellular location is the cytoplasm. The enzyme catalyses D-glyceraldehyde 3-phosphate + phosphate + NAD(+) = (2R)-3-phospho-glyceroyl phosphate + NADH + H(+). It functions in the pathway carbohydrate degradation; glycolysis; pyruvate from D-glyceraldehyde 3-phosphate: step 1/5. In terms of biological role, catalyzes the oxidative phosphorylation of glyceraldehyde 3-phosphate (G3P) to 1,3-bisphosphoglycerate (BPG) using the cofactor NAD. The first reaction step involves the formation of a hemiacetal intermediate between G3P and a cysteine residue, and this hemiacetal intermediate is then oxidized to a thioester, with concomitant reduction of NAD to NADH. The reduced NADH is then exchanged with the second NAD, and the thioester is attacked by a nucleophilic inorganic phosphate to produce BPG. This chain is Glyceraldehyde-3-phosphate dehydrogenase (gap), found in Chlamydia muridarum (strain MoPn / Nigg).